Here is a 569-residue protein sequence, read N- to C-terminus: Urease subunit beta (569 aa).

The Urease domain occupies 131–569; it reads GGIDTHIHFI…VSLGQLYCLF (439 aa). The Ni(2+) site is built by H136, H138, and K219. K219 bears the N6-carboxylysine mark. Position 221 (H221) interacts with substrate. 2 residues coordinate Ni(2+): H248 and H274. H322 serves as the catalytic Proton donor. D362 is a Ni(2+) binding site.

The protein belongs to the metallo-dependent hydrolases superfamily. Urease alpha subunit family. In terms of assembly, heterohexamer of 3 UreA (alpha) and 3 UreB (beta) subunits. The cofactor is Ni cation. In terms of processing, carboxylation allows a single lysine to coordinate two nickel ions.

The protein resides in the cytoplasm. The enzyme catalyses urea + 2 H2O + H(+) = hydrogencarbonate + 2 NH4(+). Its pathway is nitrogen metabolism; urea degradation; CO(2) and NH(3) from urea (urease route): step 1/1. The sequence is that of Urease subunit beta from Helicobacter hepaticus (strain ATCC 51449 / 3B1).